The sequence spans 1171 residues: ATP-dependent helicase/deoxyribonuclease subunit B (1171 aa).

The region spanning 1–390 (MSLRFVIGRA…HPLVECIRSA (390 aa)) is the UvrD-like helicase ATP-binding domain. An ATP-binding site is contributed by 8–15 (GRAGSGKS). The 307-residue stretch at 281–587 (MEQPRFHSPA…QFANIPPSLD (307 aa)) folds into the UvrD-like helicase C-terminal domain. The [4Fe-4S] cluster site is built by Cys805, Cys1129, Cys1132, and Cys1138.

This sequence belongs to the helicase family. AddB/RexB type 1 subfamily. As to quaternary structure, heterodimer of AddA and AddB. It depends on Mg(2+) as a cofactor. Requires [4Fe-4S] cluster as cofactor.

Its function is as follows. The heterodimer acts as both an ATP-dependent DNA helicase and an ATP-dependent, dual-direction single-stranded exonuclease. Recognizes the chi site generating a DNA molecule suitable for the initiation of homologous recombination. The AddB subunit has 5' -&gt; 3' nuclease activity but not helicase activity. The sequence is that of ATP-dependent helicase/deoxyribonuclease subunit B from Bacillus cereus (strain B4264).